A 306-amino-acid chain; its full sequence is Acetyl-coenzyme A carboxylase carboxyl transferase subunit beta (306 aa).

The CoA carboxyltransferase N-terminal domain maps to 27 to 296 (LWHKCPSCEA…PRFVAPVIEP (270 aa)). Zn(2+) contacts are provided by Cys-31, Cys-34, Cys-50, and Cys-53. A C4-type zinc finger spans residues 31–53 (CPSCEAVLYRPELEKTLDVCPKC).

This sequence belongs to the AccD/PCCB family. Acetyl-CoA carboxylase is a heterohexamer composed of biotin carboxyl carrier protein (AccB), biotin carboxylase (AccC) and two subunits each of ACCase subunit alpha (AccA) and ACCase subunit beta (AccD). Zn(2+) is required as a cofactor.

The protein localises to the cytoplasm. The catalysed reaction is N(6)-carboxybiotinyl-L-lysyl-[protein] + acetyl-CoA = N(6)-biotinyl-L-lysyl-[protein] + malonyl-CoA. It participates in lipid metabolism; malonyl-CoA biosynthesis; malonyl-CoA from acetyl-CoA: step 1/1. Component of the acetyl coenzyme A carboxylase (ACC) complex. Biotin carboxylase (BC) catalyzes the carboxylation of biotin on its carrier protein (BCCP) and then the CO(2) group is transferred by the transcarboxylase to acetyl-CoA to form malonyl-CoA. This is Acetyl-coenzyme A carboxylase carboxyl transferase subunit beta from Pseudomonas syringae pv. syringae (strain B728a).